The primary structure comprises 1044 residues: Disease resistance protein PIK6-NP (1044 aa).

The segment at Leu3 to Val184 is structured coiled coil (CC) domain. An NB-ARC domain is found at Lys187–Gln543. A disordered region spans residues Gln258–Met302. 3 LRR repeats span residues Leu635–Tyr657, Met682–Leu705, and Glu706–Leu728. The tract at residues Gly737–Lys771 is disordered. LRR repeat units follow at residues Leu808 to Ser834, Ser840 to Met862, Pro866 to Ile888, Thr889 to Asn911, Lys935 to Ser958, and Met980 to Asn1004.

The protein belongs to the disease resistance NB-LRR family.

Its function is as follows. Probable disease resistance protein. Resistance proteins guard the plant against pathogens that contain an appropriate avirulence protein via an indirect interaction with this avirulence protein. That triggers a defense system including the hypersensitive response, which restricts the pathogen growth. At the opposite of cultivar Kusabue, the cultivar Nipponbare doesn't recognize the effector avirulence protein AVR-Pik from M.oryzae. This chain is Disease resistance protein PIK6-NP, found in Oryza sativa subsp. japonica (Rice).